We begin with the raw amino-acid sequence, 854 residues long: MKFLKNIKSLEFRLAESMLKSINDLKEKYLAFSDEELKNMTNVFKEKLKKNVSLESIRIDAFAVAREATFRVLKKRPYDVQMIGGLILDFGSVAEMKTGEGKTITSIAPVYLNALKGSGVIVSTVNEYLAERDAAEMGEVFKWLGLSVGLNKANMPSNLKRAAYKCDITYSVHSELGFDYLRDNMVNSFEEKVQRDLNFALIDEVDSILIDEAKTPLIISGGKSDEVSLYAVTDQFVRTLDHVDYAIDEETKAINLTAQGIEKTKKFFNFNSLYNLENSELIHRLQNALRAHKVMKKDVEYVVLNGKIELVDTFTGRIMEGRSYSEGLQQAIQAKELVEIDPETKTLATITYQNFFRLFKKLSGMTGTGKTEEQEFIDIYNMRVTEIPTNVPIARIDHPEKVYVTFQAKYKAVVEEIKRLHAKKQPILVGTSQVEESEYLHQLLLKENLPHTVLNAKQNKNEADIIAKAGIAGAITIATNMAGRGTDIKPDAESLKQGGLFVLGTDKSEARRIDNQLKGRSGRQGDVGESRFFISIDDQLIRRFSLQDKWKEIFAEYKDNEIIDKQIKKAFDKAQRKIEGFNYDNRKNVLNYDDVIRQQRDIIYSQRDSILLQDDLSLVVEKMIQRNSKQIIKYGELYTRTGALDHKALVNFVNKEYMNICDFKFTLEDFNNYINEEIPQHLSNILIREYRKMREFLVEKSGKLPTNLFERRAIISALDEKWQNHINLMDKLRQSVNLVQYSQKNPFQTYTEIGTKHFEQLVEDIATNSLKIIMNNPSAKFQNLDGDFKNEQIKLEDGSIITIPANIPFDIKEQIISKAKELLKESGEKRKVFEKNILSDLNLVDEKFRDSSKW.

Residues Gln-81, 99–103, and Asp-487 each bind ATP; that span reads GEGKT.

It belongs to the SecA family. Monomer and homodimer. Part of the essential Sec protein translocation apparatus which comprises SecA, SecYEG and auxiliary proteins SecDF. Other proteins may also be involved.

It localises to the cell membrane. Its subcellular location is the cytoplasm. It catalyses the reaction ATP + H2O + cellular proteinSide 1 = ADP + phosphate + cellular proteinSide 2.. Part of the Sec protein translocase complex. Interacts with the SecYEG preprotein conducting channel. Has a central role in coupling the hydrolysis of ATP to the transfer of proteins into and across the cell membrane, serving as an ATP-driven molecular motor driving the stepwise translocation of polypeptide chains across the membrane. The protein is Protein translocase subunit SecA of Mycoplasma mobile (strain ATCC 43663 / 163K / NCTC 11711) (Mesomycoplasma mobile).